A 237-amino-acid chain; its full sequence is Phosphoribosylaminoimidazole-succinocarboxamide synthase (237 aa).

Belongs to the SAICAR synthetase family.

The enzyme catalyses 5-amino-1-(5-phospho-D-ribosyl)imidazole-4-carboxylate + L-aspartate + ATP = (2S)-2-[5-amino-1-(5-phospho-beta-D-ribosyl)imidazole-4-carboxamido]succinate + ADP + phosphate + 2 H(+). The protein operates within purine metabolism; IMP biosynthesis via de novo pathway; 5-amino-1-(5-phospho-D-ribosyl)imidazole-4-carboxamide from 5-amino-1-(5-phospho-D-ribosyl)imidazole-4-carboxylate: step 1/2. The polypeptide is Phosphoribosylaminoimidazole-succinocarboxamide synthase (Listeria monocytogenes serovar 1/2a (strain ATCC BAA-679 / EGD-e)).